Consider the following 323-residue polypeptide: Transaldolase (323 aa).

Lys-133 serves as the catalytic Schiff-base intermediate with substrate.

Belongs to the transaldolase family. Type 1 subfamily. As to quaternary structure, monomer.

It carries out the reaction D-sedoheptulose 7-phosphate + D-glyceraldehyde 3-phosphate = D-erythrose 4-phosphate + beta-D-fructose 6-phosphate. It functions in the pathway carbohydrate degradation; pentose phosphate pathway; D-glyceraldehyde 3-phosphate and beta-D-fructose 6-phosphate from D-ribose 5-phosphate and D-xylulose 5-phosphate (non-oxidative stage): step 2/3. Functionally, transaldolase important for the balance of metabolites in the pentose-phosphate pathway. Involved in xylose fermentation to ethanol. This is Transaldolase from Fusarium oxysporum f. sp. lycopersici (strain 4287 / CBS 123668 / FGSC 9935 / NRRL 34936) (Fusarium vascular wilt of tomato).